We begin with the raw amino-acid sequence, 156 residues long: ATP synthase subunit b (156 aa).

A helical transmembrane segment spans residues 13-33 (AFIIFVWFCMKFVWPPLMNAI).

It belongs to the ATPase B chain family. As to quaternary structure, F-type ATPases have 2 components, F(1) - the catalytic core - and F(0) - the membrane proton channel. F(1) has five subunits: alpha(3), beta(3), gamma(1), delta(1), epsilon(1). F(0) has three main subunits: a(1), b(2) and c(10-14). The alpha and beta chains form an alternating ring which encloses part of the gamma chain. F(1) is attached to F(0) by a central stalk formed by the gamma and epsilon chains, while a peripheral stalk is formed by the delta and b chains.

Its subcellular location is the cell inner membrane. Its function is as follows. F(1)F(0) ATP synthase produces ATP from ADP in the presence of a proton or sodium gradient. F-type ATPases consist of two structural domains, F(1) containing the extramembraneous catalytic core and F(0) containing the membrane proton channel, linked together by a central stalk and a peripheral stalk. During catalysis, ATP synthesis in the catalytic domain of F(1) is coupled via a rotary mechanism of the central stalk subunits to proton translocation. In terms of biological role, component of the F(0) channel, it forms part of the peripheral stalk, linking F(1) to F(0). This Shewanella sediminis (strain HAW-EB3) protein is ATP synthase subunit b.